Consider the following 308-residue polypeptide: Acetylglutamate kinase (308 aa).

Substrate is bound by residues 64–65, Arg-86, and Asn-192; that span reads GG.

Belongs to the acetylglutamate kinase family. ArgB subfamily.

It is found in the cytoplasm. It carries out the reaction N-acetyl-L-glutamate + ATP = N-acetyl-L-glutamyl 5-phosphate + ADP. It participates in amino-acid biosynthesis; L-arginine biosynthesis; N(2)-acetyl-L-ornithine from L-glutamate: step 2/4. Functionally, catalyzes the ATP-dependent phosphorylation of N-acetyl-L-glutamate. This is Acetylglutamate kinase from Myxococcus xanthus (strain DK1622).